The primary structure comprises 313 residues: Porphobilinogen deaminase (313 aa).

S-(dipyrrolylmethanemethyl)cysteine is present on C242.

This sequence belongs to the HMBS family. In terms of assembly, monomer. Requires dipyrromethane as cofactor.

The catalysed reaction is 4 porphobilinogen + H2O = hydroxymethylbilane + 4 NH4(+). It participates in porphyrin-containing compound metabolism; protoporphyrin-IX biosynthesis; coproporphyrinogen-III from 5-aminolevulinate: step 2/4. Its function is as follows. Tetrapolymerization of the monopyrrole PBG into the hydroxymethylbilane pre-uroporphyrinogen in several discrete steps. The chain is Porphobilinogen deaminase from Pseudomonas syringae pv. syringae (strain B728a).